The following is a 915-amino-acid chain: Protein translocase subunit SecA (915 aa).

ATP-binding positions include Q87, 105 to 109, and D516; that span reads GEGKT. Residues 866–915 form a disordered region; the sequence is MTYGAPSDGDIGGSVEDEPLELPEGARVGRNDPCPCGSGKKYKQCHGKLS. Zn(2+) is bound by residues C899, C901, C910, and H911. Basic residues predominate over residues 905 to 915; the sequence is KKYKQCHGKLS.

Belongs to the SecA family. In terms of assembly, monomer and homodimer. Part of the essential Sec protein translocation apparatus which comprises SecA, SecYEG and auxiliary proteins SecDF-YajC and YidC. It depends on Zn(2+) as a cofactor.

The protein resides in the cell inner membrane. The protein localises to the cytoplasm. It catalyses the reaction ATP + H2O + cellular proteinSide 1 = ADP + phosphate + cellular proteinSide 2.. Its function is as follows. Part of the Sec protein translocase complex. Interacts with the SecYEG preprotein conducting channel. Has a central role in coupling the hydrolysis of ATP to the transfer of proteins into and across the cell membrane, serving both as a receptor for the preprotein-SecB complex and as an ATP-driven molecular motor driving the stepwise translocation of polypeptide chains across the membrane. The protein is Protein translocase subunit SecA of Delftia acidovorans (strain DSM 14801 / SPH-1).